Consider the following 141-residue polypeptide: Putative pre-16S rRNA nuclease (141 aa).

Belongs to the YqgF nuclease family.

Its subcellular location is the cytoplasm. Functionally, could be a nuclease involved in processing of the 5'-end of pre-16S rRNA. The protein is Putative pre-16S rRNA nuclease of Desulforudis audaxviator (strain MP104C).